Consider the following 280-residue polypeptide: Large ribosomal subunit protein uL2 (280 aa).

Disordered stretches follow at residues 33-55 (LTEG…RRRG) and 224-266 (AMNP…KASQ). Basic residues predominate over residues 256 to 266 (TRTRNKNKASQ).

It belongs to the universal ribosomal protein uL2 family. In terms of assembly, part of the 50S ribosomal subunit. Forms a bridge to the 30S subunit in the 70S ribosome.

In terms of biological role, one of the primary rRNA binding proteins. Required for association of the 30S and 50S subunits to form the 70S ribosome, for tRNA binding and peptide bond formation. It has been suggested to have peptidyltransferase activity; this is somewhat controversial. Makes several contacts with the 16S rRNA in the 70S ribosome. This is Large ribosomal subunit protein uL2 from Ruegeria pomeroyi (strain ATCC 700808 / DSM 15171 / DSS-3) (Silicibacter pomeroyi).